We begin with the raw amino-acid sequence, 437 residues long: MKVYIETMGCAMNSRDSEHLLSELSKLDYKETSDPKTADLILINTCSVREKPERKLFSEIGQFAKIKKPNAKIGVCGCTASHMGADILKKAPSVSFVLGARNVSKISQVIHKEKAVEVAIDYDESAYAFEFFEKKAQIRSLLNISIGCDKKCAYCIVPHTRGKEISIPMDLILKEAEKLANNGTKELMLLGQNVNNYGARFSSEHAKVDFSDLLDKLSEISGIERIRFTSPHPLHMNDGFLERFAKNPKVCKSIHMPLQSGSSAVLKMMRRGYSKEWFLNRVERLKALVPEVGISTDIIVGFPNESDKDFEDTMEVLEKVRFDTLYSFIYSPRPFTEAGAWKERVPLEVSSSRLERLQNRHKEILEEKAKLEVGKTHVVLVENRREINNQIVGFEGRSDTGKFIEVACKEKRNPGELVEVEIISHSKGRLMATTKGN.

One can recognise an MTTase N-terminal domain in the interval 1 to 115 (MKVYIETMGC…ISQVIHKEKA (115 aa)). Residues C10, C46, C78, C148, C152, and C155 each coordinate [4Fe-4S] cluster. Residues 134 to 367 (KKAQIRSLLN…QNRHKEILEE (234 aa)) form the Radical SAM core domain. The region spanning 370–436 (KLEVGKTHVV…KGRLMATTKG (67 aa)) is the TRAM domain.

Belongs to the methylthiotransferase family. MiaB subfamily. As to quaternary structure, monomer. Requires [4Fe-4S] cluster as cofactor.

Its subcellular location is the cytoplasm. It catalyses the reaction N(6)-dimethylallyladenosine(37) in tRNA + (sulfur carrier)-SH + AH2 + 2 S-adenosyl-L-methionine = 2-methylsulfanyl-N(6)-dimethylallyladenosine(37) in tRNA + (sulfur carrier)-H + 5'-deoxyadenosine + L-methionine + A + S-adenosyl-L-homocysteine + 2 H(+). Catalyzes the methylthiolation of N6-(dimethylallyl)adenosine (i(6)A), leading to the formation of 2-methylthio-N6-(dimethylallyl)adenosine (ms(2)i(6)A) at position 37 in tRNAs that read codons beginning with uridine. The polypeptide is tRNA-2-methylthio-N(6)-dimethylallyladenosine synthase (Helicobacter pylori (strain G27)).